The primary structure comprises 348 residues: Beta-hexosaminidase (348 aa).

Residues Asp62, Arg70, Arg134, and 164-165 (KH) each bind substrate. Residue His177 is the Proton donor/acceptor of the active site. Asp249 functions as the Nucleophile in the catalytic mechanism.

The protein belongs to the glycosyl hydrolase 3 family. NagZ subfamily.

It is found in the cytoplasm. The catalysed reaction is Hydrolysis of terminal non-reducing N-acetyl-D-hexosamine residues in N-acetyl-beta-D-hexosaminides.. It functions in the pathway cell wall biogenesis; peptidoglycan recycling. Functionally, plays a role in peptidoglycan recycling by cleaving the terminal beta-1,4-linked N-acetylglucosamine (GlcNAc) from peptide-linked peptidoglycan fragments, giving rise to free GlcNAc, anhydro-N-acetylmuramic acid and anhydro-N-acetylmuramic acid-linked peptides. This is Beta-hexosaminidase from Histophilus somni (strain 2336) (Haemophilus somnus).